The following is a 148-amino-acid chain: Lysozyme C (148 aa).

The first 18 residues, 1–18 (MKALIILGLVLLSVTVQG), serve as a signal peptide directing secretion. The region spanning 19–148 (KIFERCELAR…VSQYVEGCGV (130 aa)) is the C-type lysozyme domain. 4 cysteine pairs are disulfide-bonded: Cys24/Cys146, Cys48/Cys134, Cys83/Cys99, and Cys95/Cys113. Active-site residues include Glu53 and Asp71.

The protein belongs to the glycosyl hydrolase 22 family. As to quaternary structure, monomer.

It carries out the reaction Hydrolysis of (1-&gt;4)-beta-linkages between N-acetylmuramic acid and N-acetyl-D-glucosamine residues in a peptidoglycan and between N-acetyl-D-glucosamine residues in chitodextrins.. Functionally, lysozymes have primarily a bacteriolytic function; those in tissues and body fluids are associated with the monocyte-macrophage system and enhance the activity of immunoagents. This Colobus angolensis (Angolan colobus) protein is Lysozyme C (LYZ).